Here is a 349-residue protein sequence, read N- to C-terminus: Protein RAE1 (349 aa).

Residues 1–21 (MATFGAPATANSNPNKSYEVT) form a disordered region. An N-acetylalanine modification is found at alanine 2. The segment covering 9 to 21 (TANSNPNKSYEVT) has biased composition (polar residues). WD repeat units follow at residues 23–62 (SPAD…ASLA), 70–109 (SHDQ…QPVT), 112–151 (MHEG…PVHT), 153–190 (QLPD…TEFK), and 244–283 (NDIY…RLKA). The DWD box motif lies at 128–144 (LLATGSWDKTLKYWDTR).

The protein belongs to the WD repeat rae1 family. Part of the nuclear pore complex (NPC). The NPC has an eight-fold symmetrical structure comprising a central transport channel and two rings, the cytoplasmic and nuclear rings, to which eight filaments are attached. The cytoplasmic filaments have loose ends, while the nuclear filaments are joined in a distal ring, forming a nuclear basket. NPCs are highly dynamic in configuration and composition, and can be devided in 3 subcomplexes, the NUP62 subcomplex, the NUP107-160 subcomplex and the NUP93 subcomplex, containing approximately 30 different nucleoporin proteins. Interacts with DDB1A.

The protein resides in the nucleus envelope. Its subcellular location is the nucleus. It localises to the nuclear pore complex. The sequence is that of Protein RAE1 from Arabidopsis thaliana (Mouse-ear cress).